A 300-amino-acid chain; its full sequence is Ribosomal protein L11 methyltransferase (300 aa).

S-adenosyl-L-methionine contacts are provided by threonine 152, glycine 173, aspartate 195, and asparagine 234.

The protein belongs to the methyltransferase superfamily. PrmA family.

The protein resides in the cytoplasm. The catalysed reaction is L-lysyl-[protein] + 3 S-adenosyl-L-methionine = N(6),N(6),N(6)-trimethyl-L-lysyl-[protein] + 3 S-adenosyl-L-homocysteine + 3 H(+). Its function is as follows. Methylates ribosomal protein L11. This is Ribosomal protein L11 methyltransferase from Burkholderia cenocepacia (strain ATCC BAA-245 / DSM 16553 / LMG 16656 / NCTC 13227 / J2315 / CF5610) (Burkholderia cepacia (strain J2315)).